The sequence spans 176 residues: Cytochrome b (176 aa).

3 helical membrane passes run 33–53 (FGSLLGVCLMMQILTGLFLAM), 77–98 (WLLRYLHANGASMFFICLYLHI), and 113–133 (WNVGIILLFAVMATAFMGYVL). Residues His83 and His97 each coordinate heme b.

Belongs to the cytochrome b family. The cytochrome bc1 complex contains 11 subunits: 3 respiratory subunits (MT-CYB, CYC1 and UQCRFS1), 2 core proteins (UQCRC1 and UQCRC2) and 6 low-molecular weight proteins (UQCRH/QCR6, UQCRB/QCR7, UQCRQ/QCR8, UQCR10/QCR9, UQCR11/QCR10 and a cleavage product of UQCRFS1). This cytochrome bc1 complex then forms a dimer. It depends on heme b as a cofactor.

Its subcellular location is the mitochondrion inner membrane. Functionally, component of the ubiquinol-cytochrome c reductase complex (complex III or cytochrome b-c1 complex) that is part of the mitochondrial respiratory chain. The b-c1 complex mediates electron transfer from ubiquinol to cytochrome c. Contributes to the generation of a proton gradient across the mitochondrial membrane that is then used for ATP synthesis. The sequence is that of Cytochrome b (MT-CYB) from Promops centralis (Big crested mastiff bat).